A 339-amino-acid polypeptide reads, in one-letter code: Phenylalanine--tRNA ligase alpha subunit (339 aa).

Position 250 (Glu-250) interacts with Mg(2+).

This sequence belongs to the class-II aminoacyl-tRNA synthetase family. Phe-tRNA synthetase alpha subunit type 1 subfamily. In terms of assembly, tetramer of two alpha and two beta subunits. Mg(2+) is required as a cofactor.

Its subcellular location is the cytoplasm. It carries out the reaction tRNA(Phe) + L-phenylalanine + ATP = L-phenylalanyl-tRNA(Phe) + AMP + diphosphate + H(+). In Christiangramia forsetii (strain DSM 17595 / CGMCC 1.15422 / KT0803) (Gramella forsetii), this protein is Phenylalanine--tRNA ligase alpha subunit.